Here is a 427-residue protein sequence, read N- to C-terminus: Enolase (427 aa).

Gln163 contributes to the (2R)-2-phosphoglycerate binding site. Glu205 functions as the Proton donor in the catalytic mechanism. 3 residues coordinate Mg(2+): Asp242, Glu285, and Asp312. The (2R)-2-phosphoglycerate site is built by Lys337, Arg366, Ser367, and Lys388. Lys337 acts as the Proton acceptor in catalysis.

It belongs to the enolase family. The cofactor is Mg(2+).

The protein localises to the cytoplasm. It localises to the secreted. Its subcellular location is the cell surface. The enzyme catalyses (2R)-2-phosphoglycerate = phosphoenolpyruvate + H2O. It participates in carbohydrate degradation; glycolysis; pyruvate from D-glyceraldehyde 3-phosphate: step 4/5. Its function is as follows. Catalyzes the reversible conversion of 2-phosphoglycerate (2-PG) into phosphoenolpyruvate (PEP). It is essential for the degradation of carbohydrates via glycolysis. The chain is Enolase from Variovorax paradoxus (strain S110).